The following is a 290-amino-acid chain: Pyridoxal kinase PdxY (290 aa).

Substrate contacts are provided by residues serine 9 and 44-45 (TQ). ATP-binding residues include aspartate 112, valine 144, glutamate 149, and lysine 182. Substrate is bound at residue aspartate 221.

Belongs to the pyridoxine kinase family. PdxY subfamily. Homodimer. It depends on Mg(2+) as a cofactor.

It catalyses the reaction pyridoxal + ATP = pyridoxal 5'-phosphate + ADP + H(+). The protein operates within cofactor metabolism; pyridoxal 5'-phosphate salvage; pyridoxal 5'-phosphate from pyridoxal: step 1/1. In terms of biological role, pyridoxal kinase involved in the salvage pathway of pyridoxal 5'-phosphate (PLP). Catalyzes the phosphorylation of pyridoxal to PLP. The sequence is that of Pyridoxal kinase PdxY from Vibrio vulnificus (strain CMCP6).